The chain runs to 620 residues: Chaperone protein DnaK (620 aa).

Residues 579–620 (KAQKEASAGAEASEDASGPSSTGSASDDDVVDADYEVVDEDK) are disordered. Over residues 583-603 (EASAGAEASEDASGPSSTGSA) the composition is skewed to low complexity. Residues 604–620 (SDDDVVDADYEVVDEDK) are compositionally biased toward acidic residues.

It belongs to the heat shock protein 70 family.

Functionally, acts as a chaperone. The sequence is that of Chaperone protein DnaK from Methanococcoides burtonii (strain DSM 6242 / NBRC 107633 / OCM 468 / ACE-M).